The following is a 405-amino-acid chain: Tryptophan synthase beta chain (405 aa).

Residue K95 is modified to N6-(pyridoxal phosphate)lysine.

It belongs to the TrpB family. In terms of assembly, tetramer of two alpha and two beta chains. The cofactor is pyridoxal 5'-phosphate.

It carries out the reaction (1S,2R)-1-C-(indol-3-yl)glycerol 3-phosphate + L-serine = D-glyceraldehyde 3-phosphate + L-tryptophan + H2O. It participates in amino-acid biosynthesis; L-tryptophan biosynthesis; L-tryptophan from chorismate: step 5/5. The beta subunit is responsible for the synthesis of L-tryptophan from indole and L-serine. This is Tryptophan synthase beta chain from Pseudomonas putida (strain ATCC 700007 / DSM 6899 / JCM 31910 / BCRC 17059 / LMG 24140 / F1).